The sequence spans 206 residues: Outer-membrane lipoprotein carrier protein (206 aa).

An N-terminal signal peptide occupies residues 1 to 21 (MTRLLFVLVLSVCLLPVPVKA).

It belongs to the LolA family. As to quaternary structure, monomer.

Its subcellular location is the periplasm. In terms of biological role, participates in the translocation of lipoproteins from the inner membrane to the outer membrane. Only forms a complex with a lipoprotein if the residue after the N-terminal Cys is not an aspartate (The Asp acts as a targeting signal to indicate that the lipoprotein should stay in the inner membrane). The sequence is that of Outer-membrane lipoprotein carrier protein from Nitrosomonas europaea (strain ATCC 19718 / CIP 103999 / KCTC 2705 / NBRC 14298).